The primary structure comprises 1183 residues: PAN2-PAN3 deadenylation complex catalytic subunit PAN2 (1183 aa).

Residues 1–24 form a disordered region; it reads MDGWTEISRIAATTQPPKGPSPHI. WD repeat units follow at residues 159 to 207, 269 to 309, and 327 to 366; these read DLNK…SIKS, PFPA…NVFL, and SKAP…STIT. Residues 369 to 520 are linker; it reads FVNFPASIEQ…FQYKVPLSRK (152 aa). A USP domain is found at 521–919; the sequence is KIPNCYSRLQ…KPVILVYHDS (399 aa). Positions 977–1151 constitute an Exonuclease domain; sequence IAIDAEFVNL…EDAYTALLLY (175 aa). 4 residues coordinate a divalent metal cation: D980, E982, D1090, and D1143.

The protein belongs to the peptidase C19 family. PAN2 subfamily. As to quaternary structure, forms a heterotrimer with an asymmetric homodimer of the regulatory subunit PAN3 to form the poly(A)-nuclease (PAN) deadenylation complex. A divalent metal cation is required as a cofactor.

It localises to the cytoplasm. It carries out the reaction Exonucleolytic cleavage of poly(A) to 5'-AMP.. Its activity is regulated as follows. Positively regulated by the regulatory subunit PAN3. In terms of biological role, catalytic subunit of the poly(A)-nuclease (PAN) deadenylation complex, one of two cytoplasmic mRNA deadenylases involved in mRNA turnover. PAN specifically shortens poly(A) tails of RNA and the activity is stimulated by poly(A)-binding protein PAB1. PAN deadenylation is followed by rapid degradation of the shortened mRNA tails by the CCR4-NOT complex. Deadenylated mRNAs are then degraded by two alternative mechanisms, namely exosome-mediated 3'-5' exonucleolytic degradation, or deadenylation-dependent mRNA decaping and subsequent 5'-3' exonucleolytic degradation by XRN1. May also be involved in post-transcriptional maturation of mRNA poly(A) tails. In Scheffersomyces stipitis (strain ATCC 58785 / CBS 6054 / NBRC 10063 / NRRL Y-11545) (Yeast), this protein is PAN2-PAN3 deadenylation complex catalytic subunit PAN2.